We begin with the raw amino-acid sequence, 160 residues long: Small ribosomal subunit protein uS7 (160 aa).

The protein belongs to the universal ribosomal protein uS7 family. Part of the 30S ribosomal subunit. Contacts proteins S9 and S11.

Its function is as follows. One of the primary rRNA binding proteins, it binds directly to 16S rRNA where it nucleates assembly of the head domain of the 30S subunit. Is located at the subunit interface close to the decoding center, probably blocks exit of the E-site tRNA. In Rickettsia conorii (strain ATCC VR-613 / Malish 7), this protein is Small ribosomal subunit protein uS7.